A 351-amino-acid chain; its full sequence is Histidinol-phosphate aminotransferase (351 aa).

K213 bears the N6-(pyridoxal phosphate)lysine mark.

The protein belongs to the class-II pyridoxal-phosphate-dependent aminotransferase family. Histidinol-phosphate aminotransferase subfamily. As to quaternary structure, homodimer. It depends on pyridoxal 5'-phosphate as a cofactor.

The catalysed reaction is L-histidinol phosphate + 2-oxoglutarate = 3-(imidazol-4-yl)-2-oxopropyl phosphate + L-glutamate. The protein operates within amino-acid biosynthesis; L-histidine biosynthesis; L-histidine from 5-phospho-alpha-D-ribose 1-diphosphate: step 7/9. This Clostridium kluyveri (strain NBRC 12016) protein is Histidinol-phosphate aminotransferase.